Consider the following 188-residue polypeptide: Cytochrome b561 homolog 2 (188 aa).

Residues 1–15 (MSFTNTPERYGVISA) are Cytoplasmic-facing. A helical membrane pass occupies residues 16-36 (AFHWLSAIIVYGMFALGLWMV). His18 and His52 together coordinate heme b. Over 37–54 (TLSYYDGWYHKAPELHKS) the chain is Periplasmic. The helical transmembrane segment at 55 to 75 (IGILLMMGLVIRVLWRVISPP) threads the bilayer. The Cytoplasmic portion of the chain corresponds to 76–91 (PGPLPSYSPMTRLAAR). The helical transmembrane segment at 92-112 (AGHLALYLLLFAIGISGYLIS) threads the bilayer. Over 113 to 143 (TADGKPISVFGWFDVPATLADAGAQADFAGA) the chain is Periplasmic. The helical transmembrane segment at 144-164 (LHFWLAWSVVVLSVMHGFMAL) threads the bilayer. Positions 145 and 159 each coordinate heme b. Topologically, residues 165 to 188 (KHHFIDKDDTLKRMLGKSSSDYGV) are cytoplasmic.

It belongs to the cytochrome b561 family. Heme b is required as a cofactor.

The protein resides in the cell inner membrane. The chain is Cytochrome b561 homolog 2 (yceJ) from Escherichia coli (strain K12).